Consider the following 95-residue polypeptide: Integration host factor subunit beta (95 aa).

This sequence belongs to the bacterial histone-like protein family. As to quaternary structure, heterodimer of an alpha and a beta chain.

In terms of biological role, this protein is one of the two subunits of integration host factor, a specific DNA-binding protein that functions in genetic recombination as well as in transcriptional and translational control. In Klebsiella pneumoniae subsp. pneumoniae (strain ATCC 700721 / MGH 78578), this protein is Integration host factor subunit beta.